Reading from the N-terminus, the 527-residue chain is Zinc finger imprinted 2 (527 aa).

Residues 1–16 are compositionally biased toward acidic residues; it reads MYQPEDDNNSDVTSDD. The disordered stretch occupies residues 1–104; that stretch reads MYQPEDDNNS…SRSQDAESYQ (104 aa). Basic and acidic residues-rich tracts occupy residues 17–26, 35–56, and 80–99; these read DMTRNRRESS, SGDR…DRWS, and FEMD…RSQD. Residues 176 to 246 enclose the KRAB domain; it reads VTFEDVLVDF…ETDSRHTVIC (71 aa). The interval 247-322 is disordered; the sequence is QGESHDDPLE…GICTSPQSAS (76 aa). The span at 259–275 shows a compositional bias: polar residues; sequence QGNQEKLLTPITMNDPK. Residues 297–307 are compositionally biased toward basic and acidic residues; the sequence is QSKDPLGKDPQ. 5 C2H2-type zinc fingers span residues 328 to 350, 356 to 378, 412 to 434, 466 to 488, and 494 to 516; these read NRCE…ERIH, YECK…QKTH, FECF…LKAH, CQCC…YRTH, and YQCQ…YQLH.

The protein belongs to the krueppel C2H2-type zinc-finger protein family. Highest levels of expression in adult testis; modest levels in fetal kidney and brain.

Its subcellular location is the nucleus. May be involved in transcriptional regulation. The polypeptide is Zinc finger imprinted 2 (ZIM2) (Homo sapiens (Human)).